Here is a 561-residue protein sequence, read N- to C-terminus: Glucose-6-phosphate isomerase (561 aa).

E366 serves as the catalytic Proton donor. Active-site residues include H397 and K525.

This sequence belongs to the GPI family.

The protein localises to the cytoplasm. The enzyme catalyses alpha-D-glucose 6-phosphate = beta-D-fructose 6-phosphate. The protein operates within carbohydrate degradation; glycolysis; D-glyceraldehyde 3-phosphate and glycerone phosphate from D-glucose: step 2/4. The sequence is that of Glucose-6-phosphate isomerase (gpi) from Dictyostelium discoideum (Social amoeba).